A 1083-amino-acid chain; its full sequence is MASNAALQGEDIPQPQESPPDTACMEAQKWIEQVTGKSFGDRDFRTGLENGILLCELLNAIKPGLVKKINRLPTPIAGLDNITLFLRGCKELGLKESQLFDPGDLQDTANRTTGRTSDCNRKLRNVLVTVYWLGKAANGCSSFSGTNLDLKEFEGLLAQIRKENEEIESPKRSIRDSGYIDCWDSERSDSLSPPRHGRDDSFDSLDSFGSRSQQTPSPDVVLRGSSDGRGSDSESDLPHRRIPDVRKDDMSARRVSFGENKAFVPFNQYLPNKNNQTAYIPAPLRKKKAEREDYRKSWSTATSPLGGERPFRSMSMCDMRYEEEGSMLPHSRAHHEHLQHVNSLLKEEDDTWQDDLARWKTRRRSASQDLIKKEEERKKMERLMSGDSELSDRRKSIKTYREIVEEKERREKELHVAYKNAKTRGEAERILKSYIEKFTISEAVLEGLVMPKILERSQSVEPSLLSSSEDPNPLKYLRQQSLPSPKYTSTVEATVTPSSPCESKSPTGLISPSKNIISKTVPMLTAKPYSQPKNTQEVLKTFKVDGKVNLNGVEEQKGKESGSQTFAAPSLTRSQMFEGVARVDAPVVETKQDVASIKLNLARPNTLNSLHESNSLCEDRNHISQKDEPDSFVQEESVHSVEQLSEGNTQSNSTTQAVPAVSSIEIPPLTVNGKDTEDKRKVEAAELIMHWSLDSNYKEAKKNSLPPLKSSENVEESSKIKENESSHKVQLNITLQTRNAWRRSQFFLQSVDTECTEKSPALVPNLSSPNRSCTWDPEEERKRQEKWQQEQERLLQERYQKEQEKLKEEWEKAQKEVEEEERKYYEEERKIIEDTVVPLTLSPNSNVHFNISERNGNFIPVLPDHAKRDQENNNGQLMAEPNRVIKNEIHMHSNVTQQQILYAHERSMLAAEETQIKGKTEKWEAEPCNHVQSNECNTPTRLTLQAGCKQVMLSESCDLGSPKTPVDENAVHHNMSSIISTRGIDSKEETLNSSQSTSQCQSPNRSVSGKKLCSTCGLPLGKGAAMIIETLSLYFHIQCFKCGLCKGQLGDATTGTDVRIRNGLLNCNDCYVKSRTAGHPTPL.

3 disordered regions span residues 1 to 22, 185 to 248, and 291 to 311; these read MASN…PPDT, SERS…VRKD, and REDY…ERPF. The Calponin-homology (CH) domain occupies 21 to 138; sequence DTACMEAQKW…TVYWLGKAAN (118 aa). A compositionally biased stretch (basic and acidic residues) spans 229–248; the sequence is RGSDSESDLPHRRIPDVRKD. A coiled-coil region spans residues 356–424; sequence LARWKTRRRS…HVAYKNAKTR (69 aa). The segment covering 462–474 has biased composition (low complexity); the sequence is PSLLSSSEDPNPL. Disordered regions lie at residues 462–512, 625–661, 698–725, and 759–779; these read PSLL…LISP, QKDE…VPAV, KEAK…ENES, and SPAL…DPEE. 2 stretches are compositionally biased toward polar residues: residues 478–512 and 640–657; these read RQQS…LISP and SVEQ…TTQA. A compositionally biased stretch (basic and acidic residues) spans 716–725; the sequence is ESSKIKENES. A coiled-coil region spans residues 784–835; sequence QEKWQQEQERLLQERYQKEQEKLKEEWEKAQKEVEEEERKYYEEERKIIEDT. The tract at residues 987 to 1006 is disordered; it reads KEETLNSSQSTSQCQSPNRS. The segment covering 991–1006 has biased composition (polar residues); it reads LNSSQSTSQCQSPNRS. One can recognise an LIM zinc-binding domain in the interval 1011-1077; it reads KLCSTCGLPL…NDCYVKSRTA (67 aa).

Belongs to the LIMCH1 family.

The protein localises to the cytoplasm. The protein resides in the cytoskeleton. It localises to the stress fiber. Functionally, actin stress fibers-associated protein that activates non-muscle myosin IIa. Through the activation of non-muscle myosin IIa, positively regulates actin stress fibers assembly and stabilizes focal adhesions. It therefore negatively regulates cell spreading and cell migration. The polypeptide is LIM and calponin homology domains-containing protein 1 (limch1) (Xenopus laevis (African clawed frog)).